The following is a 472-amino-acid chain: Interferon-induced protein with tetratricopeptide repeats 2 (472 aa).

S2 carries the N-acetylserine modification. TPR repeat units lie at residues A51 to A89, E90 to S135, P136 to N171, P172 to N208, T247 to N280, A281 to R335, V336 to T366, P367 to S405, and R406 to Q448. The segment at M446–E472 is disordered. Residues L462–E472 show a composition bias toward polar residues.

The protein belongs to the IFIT family. As to quaternary structure, domain-swapped homodimer. Component of an interferon-dependent multiprotein complex, at least composed of IFIT1, IFIT2 and IFIT3. Interacts with IFIT1 and IFIT3. Interacts with STING1/MITA and disrupts its interaction with MAVS or TBK1. Interacts with EIF3E and EIF3C.

The protein resides in the cytoplasm. The protein localises to the endoplasmic reticulum. Functionally, IFN-induced antiviral protein which inhibits expression of viral messenger RNAs lacking 2'-O-methylation of the 5' cap. The ribose 2'-O-methylation would provide a molecular signature to distinguish between self and non-self mRNAs by the host during viral infection. Viruses evolved several ways to evade this restriction system such as encoding their own 2'-O-methylase for their mRNAs or by stealing host cap containing the 2'-O-methylation (cap snatching mechanism). Binds AU-rich viral RNAs, with or without 5' triphosphorylation, RNA-binding is required for antiviral activity. Can promote apoptosis. The chain is Interferon-induced protein with tetratricopeptide repeats 2 (IFIT2) from Homo sapiens (Human).